The following is a 90-amino-acid chain: Small ribosomal subunit protein bS16 (90 aa).

This sequence belongs to the bacterial ribosomal protein bS16 family.

This Lactococcus lactis subsp. cremoris (strain SK11) protein is Small ribosomal subunit protein bS16.